A 490-amino-acid polypeptide reads, in one-letter code: Aspartyl/glutamyl-tRNA(Asn/Gln) amidotransferase subunit B (490 aa).

This sequence belongs to the GatB/GatE family. GatB subfamily. As to quaternary structure, heterotrimer of A, B and C subunits.

It carries out the reaction L-glutamyl-tRNA(Gln) + L-glutamine + ATP + H2O = L-glutaminyl-tRNA(Gln) + L-glutamate + ADP + phosphate + H(+). The enzyme catalyses L-aspartyl-tRNA(Asn) + L-glutamine + ATP + H2O = L-asparaginyl-tRNA(Asn) + L-glutamate + ADP + phosphate + 2 H(+). Allows the formation of correctly charged Asn-tRNA(Asn) or Gln-tRNA(Gln) through the transamidation of misacylated Asp-tRNA(Asn) or Glu-tRNA(Gln) in organisms which lack either or both of asparaginyl-tRNA or glutaminyl-tRNA synthetases. The reaction takes place in the presence of glutamine and ATP through an activated phospho-Asp-tRNA(Asn) or phospho-Glu-tRNA(Gln). This is Aspartyl/glutamyl-tRNA(Asn/Gln) amidotransferase subunit B from Methylobacterium sp. (strain 4-46).